A 387-amino-acid chain; its full sequence is Putative acid--amine ligase YjfC (387 aa).

101 to 103 lines the ATP pocket; that stretch reads RMD. Residues aspartate 103, glutamate 116, and asparagine 118 each contribute to the Mg(2+) site. ATP is bound by residues lysine 265, lysine 302, glycine 309, glutamine 337, and 372–374; that span reads LIT.

The protein belongs to the glutathionylspermidine synthase preATP-grasp family.

Functionally, may be a ligase forming an amide bond. Shows ATPase activity. Despite its similarity to the C-terminal synthetase domain of Gss, is not a glutathionylspermidine (Gsp) synthetase. Cannot synthesize Gsp, glutathione (GSH), or GSH intermediates, from GSH and spermidine, cysteine and glutamate, gamma-glutamylcysteine and spermidine, and gamma-glutamylcysteine and glycine. Does not bind to Gsp. The protein is Putative acid--amine ligase YjfC (yjfC) of Escherichia coli (strain K12).